The sequence spans 336 residues: Tryptophan--tRNA ligase (336 aa).

Residues Q13–S15 and G21–N22 contribute to the ATP site. The short motif at P14 to N22 is the 'HIGH' region element. D140 contacts L-tryptophan. ATP-binding positions include G152–D154, I191, and K200–S204. The 'KMSKS' region signature appears at K200–S204.

This sequence belongs to the class-I aminoacyl-tRNA synthetase family. Homodimer.

Its subcellular location is the cytoplasm. It carries out the reaction tRNA(Trp) + L-tryptophan + ATP = L-tryptophyl-tRNA(Trp) + AMP + diphosphate + H(+). In terms of biological role, catalyzes the attachment of tryptophan to tRNA(Trp). This is Tryptophan--tRNA ligase from Buchnera aphidicola subsp. Schizaphis graminum (strain Sg).